The chain runs to 309 residues: 4-hydroxy-3-methylbut-2-enyl diphosphate reductase (309 aa).

A [4Fe-4S] cluster-binding site is contributed by cysteine 13. Positions 42 and 75 each coordinate (2E)-4-hydroxy-3-methylbut-2-enyl diphosphate. Dimethylallyl diphosphate is bound by residues histidine 42 and histidine 75. Residues histidine 42 and histidine 75 each contribute to the isopentenyl diphosphate site. Cysteine 97 serves as a coordination point for [4Fe-4S] cluster. Histidine 125 contacts (2E)-4-hydroxy-3-methylbut-2-enyl diphosphate. Histidine 125 is a dimethylallyl diphosphate binding site. Histidine 125 provides a ligand contact to isopentenyl diphosphate. The active-site Proton donor is glutamate 127. Threonine 165 provides a ligand contact to (2E)-4-hydroxy-3-methylbut-2-enyl diphosphate. Cysteine 195 contacts [4Fe-4S] cluster. (2E)-4-hydroxy-3-methylbut-2-enyl diphosphate is bound by residues serine 223, serine 224, asparagine 225, and serine 267. The dimethylallyl diphosphate site is built by serine 223, serine 224, asparagine 225, and serine 267. Isopentenyl diphosphate-binding residues include serine 223, serine 224, asparagine 225, and serine 267.

Belongs to the IspH family. [4Fe-4S] cluster serves as cofactor.

The enzyme catalyses isopentenyl diphosphate + 2 oxidized [2Fe-2S]-[ferredoxin] + H2O = (2E)-4-hydroxy-3-methylbut-2-enyl diphosphate + 2 reduced [2Fe-2S]-[ferredoxin] + 2 H(+). The catalysed reaction is dimethylallyl diphosphate + 2 oxidized [2Fe-2S]-[ferredoxin] + H2O = (2E)-4-hydroxy-3-methylbut-2-enyl diphosphate + 2 reduced [2Fe-2S]-[ferredoxin] + 2 H(+). The protein operates within isoprenoid biosynthesis; dimethylallyl diphosphate biosynthesis; dimethylallyl diphosphate from (2E)-4-hydroxy-3-methylbutenyl diphosphate: step 1/1. Its pathway is isoprenoid biosynthesis; isopentenyl diphosphate biosynthesis via DXP pathway; isopentenyl diphosphate from 1-deoxy-D-xylulose 5-phosphate: step 6/6. In terms of biological role, catalyzes the conversion of 1-hydroxy-2-methyl-2-(E)-butenyl 4-diphosphate (HMBPP) into a mixture of isopentenyl diphosphate (IPP) and dimethylallyl diphosphate (DMAPP). Acts in the terminal step of the DOXP/MEP pathway for isoprenoid precursor biosynthesis. This is 4-hydroxy-3-methylbut-2-enyl diphosphate reductase from Chlamydia felis (strain Fe/C-56) (Chlamydophila felis).